Here is a 231-residue protein sequence, read N- to C-terminus: tRNA1(Val) (adenine(37)-N6)-methyltransferase (231 aa).

This sequence belongs to the methyltransferase superfamily. tRNA (adenine-N(6)-)-methyltransferase family.

It localises to the cytoplasm. It carries out the reaction adenosine(37) in tRNA1(Val) + S-adenosyl-L-methionine = N(6)-methyladenosine(37) in tRNA1(Val) + S-adenosyl-L-homocysteine + H(+). Its function is as follows. Specifically methylates the adenine in position 37 of tRNA(1)(Val) (anticodon cmo5UAC). The protein is tRNA1(Val) (adenine(37)-N6)-methyltransferase of Flavobacteriaceae bacterium (strain 3519-10).